The primary structure comprises 259 residues: Dihydroorotate dehydrogenase B (NAD(+)), electron transfer subunit (259 aa).

The region spanning 2-102 (MQKQNMIVVN…LGPLGHGFPV (101 aa)) is the FAD-binding FR-type domain. FAD contacts are provided by residues 53 to 56 (RPIS), 70 to 72 (LYR), and 77 to 78 (GT). 4 residues coordinate [2Fe-2S] cluster: C221, C226, C229, and C246.

This sequence belongs to the PyrK family. Heterotetramer of 2 PyrK and 2 PyrD type B subunits. Requires [2Fe-2S] cluster as cofactor. The cofactor is FAD.

It functions in the pathway pyrimidine metabolism; UMP biosynthesis via de novo pathway; orotate from (S)-dihydroorotate (NAD(+) route): step 1/1. In terms of biological role, responsible for channeling the electrons from the oxidation of dihydroorotate from the FMN redox center in the PyrD type B subunit to the ultimate electron acceptor NAD(+). The polypeptide is Dihydroorotate dehydrogenase B (NAD(+)), electron transfer subunit (Bacillus cereus (strain 03BB102)).